We begin with the raw amino-acid sequence, 421 residues long: UPF0229 protein lpp2857 (421 aa).

Positions 83-110 (IAGDRIKRPSGGGAGGAGGNASDSGEGE) are disordered. The segment covering 92–101 (SGGGAGGAGG) has biased composition (gly residues).

It belongs to the UPF0229 family.

This is UPF0229 protein lpp2857 from Legionella pneumophila (strain Paris).